The primary structure comprises 444 residues: MPSSDVCKAGSHRHSGWIQSLKKPGPFNLDAPENPEETLKSAFSSKILIIGAGGLGCEILKDLALSGFRDLSVIDMDTIDITNLNRQFLFNESNIDEPKANVAASMIMKRIPSTVVTPFYGKIQDKTIEFYKEFKLIICGLDSVEARRWINSTLVAIAKTGDLIPLVDGGSEGLKGQARVIIPTITSCYECSLDMLTPKISYPICTLANTPRLPEHCVEWAYLLEWPRVFLNASVDSFSKQEVFEPLDGKNSNFEPDNIRHIDWLVKRSIERANKFQIPSSSINRFFVQGIVKRIIPAVASTNAIIAASCCNEALKILTESNPFLDNYMMYVGEDGAYTYTFNLEKRSDCPVCGVLSEVYDISASSTVTLKDILNHYSKSYNLQNPSVSTAAGTPLYLASPPALQVATSKNLSQPILSITSVDVNLVITDKNLSTSLSVQLREC.

An ATP-binding site is contributed by 54 to 78 (GLGCEILKDLALSGFRDLSVIDMDT). Cys-205 acts as the Glycyl thioester intermediate in catalysis.

Belongs to the ubiquitin-activating E1 family. UBA3 subfamily. In terms of assembly, heterodimer of uba3 and ula1. Interacts with NEDD8 and ubc12. Interacts with but1 and but2.

The enzyme catalyses ATP + [NEDD8 protein] + [E1 NEDD8-activating enzyme]-L-cysteine = AMP + diphosphate + [E1 NEDD8-activating enzyme]-S-[NEDD8 protein]-yl-L-cysteine.. It functions in the pathway protein modification; protein neddylation. Functionally, catalytic subunit of the dimeric uba3-ula1 E1 enzyme. E1 activates NEDD8/ubl1 by first adenylating its C-terminal glycine residue with ATP, thereafter linking this residue to the side chain of the catalytic cysteine, yielding a NEDD8-uba3 thioester and free AMP. E1 finally transfers NEDD8 to the catalytic cysteine of ubc12. This is NEDD8-activating enzyme E1 catalytic subunit (uba3) from Schizosaccharomyces pombe (strain 972 / ATCC 24843) (Fission yeast).